Consider the following 567-residue polypeptide: Adenine deaminase 2 (567 aa).

It belongs to the metallo-dependent hydrolases superfamily. Adenine deaminase family. Mn(2+) serves as cofactor.

It catalyses the reaction adenine + H2O + H(+) = hypoxanthine + NH4(+). The protein is Adenine deaminase 2 of Oenococcus oeni (strain ATCC BAA-331 / PSU-1).